A 455-amino-acid chain; its full sequence is MSKLFLDELPESLSRKIGTVVRVLPSSLEIFEELYKYALNENSNDRSGRHKKPRIDVSSDLLKTDEISETNTIFKLEGVSVLSPLRKKLDLVFYLSNVDGSPVITLLKGNDRELSIYQLNKNIKMASFLPVPEKPNLIYLFMTYTSCEDNKFSEPVVMTLNKENTLNQFKNLGLLDSNVTDFEKCVEYIRKQAILTGFKISNPFVNSTLVDTDAEKINSFHLQCHRGTKEGTLYFLPDHIIFGFKKPILLFDASDIESITYSSITRLTFNASLVTKDGEKYEFSMIDQTEYAKIDDYVKRKQMKDKSMSEELKAKSKSKGQATDGTADQPSILQEATRQMQDEKKAGVFSDDDEENDQNFEAESDLSDGSGQESSDGAEDGEEAEEDDEEDDEEEDKKGQSALNRDNSFASINGQPEQELQYKEFKEPLELEDIPIEIDNDDDEDDEDGSGVEYD.

S2 carries the post-translational modification N-acetylserine. Residues 2–67 form a dimeric region region; sequence SKLFLDELPE…SSDLLKTDEI (66 aa). 2 PH domains span residues 68 to 200 and 217 to 301; these read SETN…GFKI and INSF…VKRK. Residues 68-301 are double PH domain; that stretch reads SETNTIFKLE…AKIDDYVKRK (234 aa). Basic and acidic residues predominate over residues 305–314; sequence DKSMSEELKA. Residues 305 to 455 form a disordered region; the sequence is DKSMSEELKA…DEDGSGVEYD (151 aa). Positions 319-339 are enriched in polar residues; the sequence is KGQATDGTADQPSILQEATRQ. 2 stretches are compositionally biased toward acidic residues: residues 350-366 and 376-395; these read SDDD…ESDL and DGAE…DEEE. Residues 402 to 418 are compositionally biased toward polar residues; it reads ALNRDNSFASINGQPEQ. Phosphoserine occurs at positions 408 and 411. Over residues 420 to 429 the composition is skewed to basic and acidic residues; that stretch reads LQYKEFKEPL. The span at 430–455 shows a compositional bias: acidic residues; sequence ELEDIPIEIDNDDDEDDEDGSGVEYD. Phosphoserine is present on S450.

It belongs to the RTT106 family. Homodimers (via the N-terminal domain). Interacts with the SWI/SNF complex. Interacts with the RSC complex. Interacts with the HIR complex. Interacts with the CAF-1 complex. Interacts with RLF2. Interacts with SIR4. Interacts with YTA7. Interacts with CAC2. Interacts with HPC2. Interacts with HIR2. Interacts with MSI1. Interacts with HIR1. Interacts with histone H3. Interacts with histone H4.

The protein resides in the nucleus. The protein localises to the chromosome. Its function is as follows. Histones H3 and H4 chaperone involved in the nucleosome formation and heterochromatin silencing. Required for the deposition of H3K56ac-carrying H3-H4 complex onto newly-replicated DNA. Plays a role in the transcriptional regulation of the cell-cycle dependent histone genes by directly recruiting the SWI/SNF and RSC chromatin remodeling complexes to the histone genes in a cell cycle dependent manner. In cooperation with HIR and ASF1, creates a repressive structure at the core histone gene promoter and contributes to their repression outside of S phase. Involved in regulation of Ty1 transposition. This Saccharomyces cerevisiae (strain ATCC 204508 / S288c) (Baker's yeast) protein is Histone chaperone RTT106.